The sequence spans 381 residues: Curved DNA-binding protein (381 aa).

Ser-8 bears the Phosphoserine mark. Thr-362 carries the phosphothreonine modification. Positions 368-375 (KNKKKSKK) match the Nuclear localization signal motif.

It belongs to the peptidase M24 family.

The protein localises to the nucleus. In terms of biological role, a non-essential protein that preferentially binds curved DNA. Binds non-curved DNA with a much lower affinity. This is Curved DNA-binding protein (cdb4) from Schizosaccharomyces pombe (strain 972 / ATCC 24843) (Fission yeast).